Here is a 403-residue protein sequence, read N- to C-terminus: Phosphopentomutase (403 aa).

Mn(2+) contacts are provided by Asp-13, Asp-298, His-303, Asp-339, His-340, and His-351.

Belongs to the phosphopentomutase family. Mn(2+) serves as cofactor.

It localises to the cytoplasm. The catalysed reaction is 2-deoxy-alpha-D-ribose 1-phosphate = 2-deoxy-D-ribose 5-phosphate. It catalyses the reaction alpha-D-ribose 1-phosphate = D-ribose 5-phosphate. Its pathway is carbohydrate degradation; 2-deoxy-D-ribose 1-phosphate degradation; D-glyceraldehyde 3-phosphate and acetaldehyde from 2-deoxy-alpha-D-ribose 1-phosphate: step 1/2. Functionally, isomerase that catalyzes the conversion of deoxy-ribose 1-phosphate (dRib-1-P) and ribose 1-phosphate (Rib-1-P) to deoxy-ribose 5-phosphate (dRib-5-P) and ribose 5-phosphate (Rib-5-P), respectively. This chain is Phosphopentomutase, found in Streptococcus suis (strain 05ZYH33).